The chain runs to 182 residues: Ribosome-recycling factor (182 aa).

Belongs to the RRF family.

It is found in the cytoplasm. Responsible for the release of ribosomes from messenger RNA at the termination of protein biosynthesis. May increase the efficiency of translation by recycling ribosomes from one round of translation to another. The polypeptide is Ribosome-recycling factor (Nostoc sp. (strain PCC 7120 / SAG 25.82 / UTEX 2576)).